A 977-amino-acid chain; its full sequence is Disks large-associated protein 3 (977 aa).

The segment covering 1 to 10 (MRGYHGDRGS) has biased composition (basic and acidic residues). 6 disordered regions span residues 1 to 30 (MRGY…PAAR), 52 to 90 (AGLG…SSTF), 137 to 167 (FHTL…ESPS), 181 to 289 (AKSH…CLDA), 398 to 417 (AMGD…SPKA), and 529 to 582 (PGSS…SADG). Low complexity predominate over residues 53 to 73 (GLGHLSPEGPLSLSEGPSSVG). Ser-58 carries the phosphoserine modification. Residues 74-85 (PEGGPGGVGAGG) show a composition bias toward gly residues. Residues 189 to 201 (PGKRDYNGPKAEG) are compositionally biased toward basic and acidic residues. Positions 202-212 (RSSSGGDSYSG) are enriched in low complexity. Basic residues predominate over residues 221–245 (SHHHHHHHHHHHHQSRHGKRSKSKD). Low complexity predominate over residues 258–271 (GWWSSDDNLDSDSG). Residues Ser-404, Ser-407, Ser-410, and Ser-414 each carry the phosphoserine modification. Positions 538 to 547 (APPPIPPGSQ) are enriched in pro residues. A phosphoserine mark is found at Ser-641 and Ser-643. Disordered regions lie at residues 739–788 (EGYP…RTSP) and 906–939 (EEKK…RQRQ). Pro residues predominate over residues 754 to 763 (PGPPPVPAPG). Composition is skewed to basic and acidic residues over residues 767-777 (GRRDSWMERGS) and 925-939 (PVKE…RQRQ). A phosphoserine mark is found at Ser-930, Ser-933, and Ser-965.

The protein belongs to the SAPAP family. In terms of assembly, interacts with DLG1 and DLG4/PSD-95. Expressed in most brain regions.

It is found in the cell membrane. The protein resides in the postsynaptic density. Its subcellular location is the synapse. In terms of biological role, may play a role in the molecular organization of synapses and neuronal cell signaling. Could be an adapter protein linking ion channel to the subsynaptic cytoskeleton. May induce enrichment of PSD-95/SAP90 at the plasma membrane. This chain is Disks large-associated protein 3 (Dlgap3), found in Rattus norvegicus (Rat).